We begin with the raw amino-acid sequence, 179 residues long: MAEAPASPGGGGGSHESGSPRGGGGGGSVREQDRFLPIANISRIMKKAIPANGKIAKDAKETVQECVSEFISFITSEASDKCQREKRKTINGDDLLWAMATLGFEDYIEPLKVYLQKYREMEGDSKLTAKSSDGSIKKDALGHVGASSSAAEGMGQQGAYNQGMGYMQPQYHNGDISNV.

A disordered region spans residues 1 to 32 (MAEAPASPGGGGGSHESGSPRGGGGGGSVREQ). Over residues 8 to 28 (PGGGGGSHESGSPRGGGGGGS) the composition is skewed to gly residues. A DNA-binding region spans residues 36 to 42 (LPIANIS). Residues 63-74 (VQECVSEFISFI) are subunit association domain (SAD). The disordered stretch occupies residues 147-179 (SSSAAEGMGQQGAYNQGMGYMQPQYHNGDISNV).

This sequence belongs to the NFYB/HAP3 subunit family. In terms of assembly, heterotrimeric transcription factor composed of three components, NF-YA, NF-YB and NF-YC. NF-YB and NF-YC must interact and dimerize for NF-YA association and DNA binding.

The protein resides in the nucleus. Component of the NF-Y/HAP transcription factor complex. The NF-Y complex stimulates the transcription of various genes by recognizing and binding to a CCAAT motif in promoters. This is Nuclear transcription factor Y subunit B (NFY2) from Zea mays (Maize).